Reading from the N-terminus, the 110-residue chain is MCAEPDDWERIERHPRKLKIAPRMLDFYESYIVWREGNFFLCLRSFPNGVIRGGRCFFRATSLPWKNVYGYHGHITSVCGATLTRINRAMVASDAGMGSIGLTNLFLYRV.

This is an uncharacterized protein from Saccharomyces cerevisiae (strain ATCC 204508 / S288c) (Baker's yeast).